A 488-amino-acid polypeptide reads, in one-letter code: B-type flagellin (488 aa).

This sequence belongs to the bacterial flagellin family. Post-translationally, phosphorylated on tyrosine residue(s).

The protein localises to the secreted. It is found in the bacterial flagellum. Functionally, flagellin is the subunit protein which polymerizes to form the filaments of bacterial flagella. This is B-type flagellin (fliC) from Pseudomonas aeruginosa (strain ATCC 15692 / DSM 22644 / CIP 104116 / JCM 14847 / LMG 12228 / 1C / PRS 101 / PAO1).